The following is a 245-amino-acid chain: 1-(5-phosphoribosyl)-5-[(5-phosphoribosylamino)methylideneamino] imidazole-4-carboxamide isomerase (245 aa).

Aspartate 11 (proton acceptor) is an active-site residue. Aspartate 132 acts as the Proton donor in catalysis.

It belongs to the HisA/HisF family.

It is found in the cytoplasm. The enzyme catalyses 1-(5-phospho-beta-D-ribosyl)-5-[(5-phospho-beta-D-ribosylamino)methylideneamino]imidazole-4-carboxamide = 5-[(5-phospho-1-deoxy-D-ribulos-1-ylimino)methylamino]-1-(5-phospho-beta-D-ribosyl)imidazole-4-carboxamide. Its pathway is amino-acid biosynthesis; L-histidine biosynthesis; L-histidine from 5-phospho-alpha-D-ribose 1-diphosphate: step 4/9. The protein is 1-(5-phosphoribosyl)-5-[(5-phosphoribosylamino)methylideneamino] imidazole-4-carboxamide isomerase of Bacillus pumilus (strain SAFR-032).